The sequence spans 188 residues: UPF0301 protein XF_2228 (188 aa).

Belongs to the UPF0301 (AlgH) family.

In Xylella fastidiosa (strain 9a5c), this protein is UPF0301 protein XF_2228.